The primary structure comprises 604 residues: Glutamine--fructose-6-phosphate aminotransferase [isomerizing] (604 aa).

Residue cysteine 2 is the Nucleophile; for GATase activity of the active site. Residues 2–218 (CGIVGVVGNR…DKELVILTKD (217 aa)) enclose the Glutamine amidotransferase type-2 domain. SIS domains lie at 284–423 (IITS…ANGK) and 452–594 (VAEK…VDKP). Lysine 599 serves as the catalytic For Fru-6P isomerization activity.

In terms of assembly, homodimer.

The protein localises to the cytoplasm. The enzyme catalyses D-fructose 6-phosphate + L-glutamine = D-glucosamine 6-phosphate + L-glutamate. In terms of biological role, catalyzes the first step in hexosamine metabolism, converting fructose-6P into glucosamine-6P using glutamine as a nitrogen source. The chain is Glutamine--fructose-6-phosphate aminotransferase [isomerizing] from Streptococcus pyogenes serotype M3 (strain ATCC BAA-595 / MGAS315).